The following is a 110-amino-acid chain: UPF0473 protein SSP1146 (110 aa).

This sequence belongs to the UPF0473 family.

The polypeptide is UPF0473 protein SSP1146 (Staphylococcus saprophyticus subsp. saprophyticus (strain ATCC 15305 / DSM 20229 / NCIMB 8711 / NCTC 7292 / S-41)).